An 81-amino-acid chain; its full sequence is Three-finger toxin 3FTx-Oxy6 (81 aa).

An N-terminal signal peptide occupies residues 1–21 (MKTLLLSLVVMTIVYLDLGYT). 4 disulfide bridges follow: cysteine 24/cysteine 43, cysteine 36/cysteine 61, cysteine 65/cysteine 73, and cysteine 74/cysteine 79.

This sequence belongs to the three-finger toxin family. Short-chain subfamily. In terms of tissue distribution, expressed by the venom gland.

It localises to the secreted. The chain is Three-finger toxin 3FTx-Oxy6 from Oxyuranus microlepidotus (Inland taipan).